A 459-amino-acid polypeptide reads, in one-letter code: Argininosuccinate lyase (459 aa).

This sequence belongs to the lyase 1 family. Argininosuccinate lyase subfamily.

It localises to the cytoplasm. The enzyme catalyses 2-(N(omega)-L-arginino)succinate = fumarate + L-arginine. It functions in the pathway amino-acid biosynthesis; L-arginine biosynthesis; L-arginine from L-ornithine and carbamoyl phosphate: step 3/3. This chain is Argininosuccinate lyase, found in Prochlorococcus marinus (strain AS9601).